Consider the following 263-residue polypeptide: MLIDPLTVVAQIINFLILVALLRRFLYTPITQVMKKRERLIAQQLQDAAHQQEVAQQEAERWRQMQQSLEHRQASFLTQAQDAADEHRHQLLQQIRDEVDSTQAQWREAVKREQHVFLSALQQRAGQQLAATLRCILQDLASANLEQQILETFITRLSHLPFSEQGVLETSLSNARGEELVISSTFPMPEDRKAQILAVLHQYAPAMESSVYQFVTIPDLICGIELKIPGYKLAWTIEQYLEQLEVKLNQVWDGMEKSWVEQG.

A helical membrane pass occupies residues 2 to 22; sequence LIDPLTVVAQIINFLILVALL.

This sequence belongs to the ATPase B chain family. F-type ATPases have 2 components, F(1) - the catalytic core - and F(0) - the membrane proton channel. F(1) has five subunits: alpha(3), beta(3), gamma(1), delta(1), epsilon(1). F(0) has four main subunits: a(1), b(1), b'(1) and c(10-14). The alpha and beta chains form an alternating ring which encloses part of the gamma chain. F(1) is attached to F(0) by a central stalk formed by the gamma and epsilon chains, while a peripheral stalk is formed by the delta, b and b' chains.

The protein resides in the cellular thylakoid membrane. Functionally, f(1)F(0) ATP synthase produces ATP from ADP in the presence of a proton or sodium gradient. F-type ATPases consist of two structural domains, F(1) containing the extramembraneous catalytic core and F(0) containing the membrane proton channel, linked together by a central stalk and a peripheral stalk. During catalysis, ATP synthesis in the catalytic domain of F(1) is coupled via a rotary mechanism of the central stalk subunits to proton translocation. Its function is as follows. Component of the F(0) channel, it forms part of the peripheral stalk, linking F(1) to F(0). In Acaryochloris marina (strain MBIC 11017), this protein is ATP synthase subunit b 2.